The following is a 414-amino-acid chain: Gamma-glutamyl phosphate reductase (414 aa).

This sequence belongs to the gamma-glutamyl phosphate reductase family.

It is found in the cytoplasm. It carries out the reaction L-glutamate 5-semialdehyde + phosphate + NADP(+) = L-glutamyl 5-phosphate + NADPH + H(+). It functions in the pathway amino-acid biosynthesis; L-proline biosynthesis; L-glutamate 5-semialdehyde from L-glutamate: step 2/2. Functionally, catalyzes the NADPH-dependent reduction of L-glutamate 5-phosphate into L-glutamate 5-semialdehyde and phosphate. The product spontaneously undergoes cyclization to form 1-pyrroline-5-carboxylate. This Xanthomonas oryzae pv. oryzae (strain MAFF 311018) protein is Gamma-glutamyl phosphate reductase.